Here is a 67-residue protein sequence, read N- to C-terminus: ATP synthase F(0) complex subunit 8 (67 aa).

The chain crosses the membrane as a helical span at residues 8–24 (TWFTTILATITTLFILF). Lys-54 is modified (N6-acetyllysine; alternate). At Lys-54 the chain carries N6-succinyllysine; alternate. An N6-acetyllysine modification is found at Lys-57.

This sequence belongs to the ATPase protein 8 family. Component of the ATP synthase complex composed at least of ATP5F1A/subunit alpha, ATP5F1B/subunit beta, ATP5MC1/subunit c (homooctomer), MT-ATP6/subunit a, MT-ATP8/subunit 8, ATP5ME/subunit e, ATP5MF/subunit f, ATP5MG/subunit g, ATP5MK/subunit k, ATP5MJ/subunit j, ATP5F1C/subunit gamma, ATP5F1D/subunit delta, ATP5F1E/subunit epsilon, ATP5PF/subunit F6, ATP5PB/subunit b, ATP5PD/subunit d, ATP5PO/subunit OSCP. ATP synthase complex consists of a soluble F(1) head domain (subunits alpha(3) and beta(3)) - the catalytic core - and a membrane F(0) domain - the membrane proton channel (subunits c, a, 8, e, f, g, k and j). These two domains are linked by a central stalk (subunits gamma, delta, and epsilon) rotating inside the F1 region and a stationary peripheral stalk (subunits F6, b, d, and OSCP). Interacts with PRICKLE3.

It is found in the mitochondrion membrane. Functionally, subunit 8, of the mitochondrial membrane ATP synthase complex (F(1)F(0) ATP synthase or Complex V) that produces ATP from ADP in the presence of a proton gradient across the membrane which is generated by electron transport complexes of the respiratory chain. ATP synthase complex consist of a soluble F(1) head domain - the catalytic core - and a membrane F(1) domain - the membrane proton channel. These two domains are linked by a central stalk rotating inside the F(1) region and a stationary peripheral stalk. During catalysis, ATP synthesis in the catalytic domain of F(1) is coupled via a rotary mechanism of the central stalk subunits to proton translocation. In vivo, can only synthesize ATP although its ATP hydrolase activity can be activated artificially in vitro. Part of the complex F(0) domain. The sequence is that of ATP synthase F(0) complex subunit 8 from Talpa europaea (European mole).